Reading from the N-terminus, the 99-residue chain is Cytochrome c oxidase subunit 4 isoform 1, mitochondrial (99 aa).

The Mitochondrial matrix portion of the chain corresponds to 1-73 (SVVKREDFSL…TFAEMNRGSN (73 aa)). An N6-acetyllysine; alternate modification is found at K4. K4 is subject to N6-succinyllysine; alternate. K28 is modified (N6-acetyllysine). Phosphoserine is present on residues S31 and S33. Position 35 is an N6-acetyllysine; alternate (K35). At K35 the chain carries N6-succinyllysine; alternate. The residue at position 42 (K42) is an N6-acetyllysine. A helical membrane pass occupies residues 74-99 (EWKTVVGTATFFIGFTALIIMWQKRY).

It belongs to the cytochrome c oxidase IV family. Component of the cytochrome c oxidase (complex IV, CIV), a multisubunit enzyme composed of 14 subunits. The complex is composed of a catalytic core of 3 subunits MT-CO1, MT-CO2 and MT-CO3, encoded in the mitochondrial DNA, and 11 supernumerary subunits COX4I, COX5A, COX5B, COX6A, COX6B, COX6C, COX7A, COX7B, COX7C, COX8 and NDUFA4, which are encoded in the nuclear genome. The complex exists as a monomer or a dimer and forms supercomplexes (SCs) in the inner mitochondrial membrane with NADH-ubiquinone oxidoreductase (complex I, CI) and ubiquinol-cytochrome c oxidoreductase (cytochrome b-c1 complex, complex III, CIII), resulting in different assemblies (supercomplex SCI(1)III(2)IV(1) and megacomplex MCI(2)III(2)IV(2)). Interacts with PHB2; the interaction decreases in absence of SPHK2. Interacts with AFG1L. Interacts with ABCB7; this interaction allows the regulation of cellular iron homeostasis and cellular reactive oxygen species (ROS) levels in cardiomyocytes. Interacts with FLVCR2; this interaction occurs in the absence of heme and is disrupted upon heme binding. Interacts with IRGC.

Its subcellular location is the mitochondrion inner membrane. It participates in energy metabolism; oxidative phosphorylation. Functionally, component of the cytochrome c oxidase, the last enzyme in the mitochondrial electron transport chain which drives oxidative phosphorylation. The respiratory chain contains 3 multisubunit complexes succinate dehydrogenase (complex II, CII), ubiquinol-cytochrome c oxidoreductase (cytochrome b-c1 complex, complex III, CIII) and cytochrome c oxidase (complex IV, CIV), that cooperate to transfer electrons derived from NADH and succinate to molecular oxygen, creating an electrochemical gradient over the inner membrane that drives transmembrane transport and the ATP synthase. Cytochrome c oxidase is the component of the respiratory chain that catalyzes the reduction of oxygen to water. Electrons originating from reduced cytochrome c in the intermembrane space (IMS) are transferred via the dinuclear copper A center (CU(A)) of subunit 2 and heme A of subunit 1 to the active site in subunit 1, a binuclear center (BNC) formed by heme A3 and copper B (CU(B)). The BNC reduces molecular oxygen to 2 water molecules using 4 electrons from cytochrome c in the IMS and 4 protons from the mitochondrial matrix. This chain is Cytochrome c oxidase subunit 4 isoform 1, mitochondrial (COX4I1), found in Trachypithecus cristatus (Silvered leaf-monkey).